The primary structure comprises 1033 residues: SIT4-associating protein SAP190 (1033 aa).

4 disordered regions span residues 32 to 82 (DQDD…TTES), 147 to 213 (PEII…QVET), 768 to 813 (FGND…HDSG), and 828 to 1033 (ENEE…KEAF). A compositionally biased stretch (basic and acidic residues) spans 158–170 (ILIERDRKDKKED). The segment covering 171 to 182 (AEEGGDSEETTN) has biased composition (acidic residues). Over residues 183-195 (DSDHDSGDERSVD) the composition is skewed to basic and acidic residues. Serine 774 bears the Phosphoserine mark. Composition is skewed to acidic residues over residues 784–793 (SEDIIGDTEG) and 828–838 (ENEEDYAEYSD). Phosphoserine is present on residues serine 857, serine 862, and serine 892. Positions 858–879 (DDGKSKSAESEFTDKISEHRDG) are enriched in basic and acidic residues. The segment covering 909–924 (SRSQPSDPKLQDQNIF) has biased composition (polar residues). Residues 932 to 944 (GVGDDDDYMDPND) show a composition bias toward acidic residues. Threonine 990 bears the Phosphothreonine mark. Position 991 is a phosphoserine (serine 991). Over residues 1000–1018 (ISSDEEDSEDEDEENDMGN) the composition is skewed to acidic residues.

It belongs to the SAPS family. In terms of assembly, associates with the SIT4 protein phosphatase catalytic subunit in a cell-cycle-dependent manner. Hyperphosphorylated in the absence of SIT4.

Its subcellular location is the cytoplasm. Functionally, positive regulator of protein phosphatase SIT4. Involved in the general amino acid control (GAAC) response regulated by TOR. Involved in the dephosphorylation of the elongator complex subunit IKI3. This chain is SIT4-associating protein SAP190 (SAP190), found in Saccharomyces cerevisiae (strain Lalvin EC1118 / Prise de mousse) (Baker's yeast).